Consider the following 529-residue polypeptide: T-complex protein 1 subunit delta (529 aa).

Belongs to the TCP-1 chaperonin family. As to quaternary structure, heterooligomeric complex of about 850 to 900 kDa that forms two stacked rings, 12 to 16 nm in diameter.

Its subcellular location is the cytoplasm. In terms of biological role, molecular chaperone; assists the folding of proteins upon ATP hydrolysis. Known to play a role, in vitro, in the folding of actin and tubulin. The sequence is that of T-complex protein 1 subunit delta (CCT4) from Eremothecium gossypii (strain ATCC 10895 / CBS 109.51 / FGSC 9923 / NRRL Y-1056) (Yeast).